The sequence spans 135 residues: Race-specific elicitor A4 (135 aa).

Positions 1-18 (MHYTTLLLSTLLVGTALA) are cleaved as a signal peptide. The propeptide occupies 19-29 (QPTNPPAKTPK). The segment at 19-39 (QPTNPPAKTPKKAPKTQPYNP) is disordered. The region spanning 47–111 (DTKCMGPKDC…DYPNLSTCPV (65 aa)) is the Chitin-binding type-2 domain. A disulfide bond links Cys-86 and Cys-101. The disordered stretch occupies residues 112–135 (KTPQPKPKKGGVGGKKASVGHPGY).

Its function is as follows. This necrosis-inducing peptide induces a hypersensitive response on Cf-4 tomato genotypes. Race-specific elicitors are compounds which only induce defense responses in genotypes of host plants which are resistant to the pathogenic race that produces the elicitor, but not in susceptible genotypes. The chain is Race-specific elicitor A4 (AVR4) from Passalora fulva (Tomato leaf mold).